A 320-amino-acid chain; its full sequence is ATP-dependent 6-phosphofructokinase (320 aa).

Gly-12 is a binding site for ATP. Residues Arg-22–Arg-26 and Arg-55–Asp-60 each bind ADP. ATP-binding positions include Arg-73–Phe-74 and Gly-103–Ser-106. Asp-104 is a Mg(2+) binding site. A substrate-binding site is contributed by Thr-126 to Asp-128. The active-site Proton acceptor is the Asp-128. Arg-155 is a binding site for ADP. Substrate contacts are provided by residues Arg-163 and Met-170–Arg-172. Residues Gly-186–Glu-188, Lys-212, and Lys-214–His-216 contribute to the ADP site. Substrate contacts are provided by residues Glu-223, Arg-244, and His-250–Arg-253.

The protein belongs to the phosphofructokinase type A (PFKA) family. ATP-dependent PFK group I subfamily. Prokaryotic clade 'B1' sub-subfamily. In terms of assembly, homotetramer. It depends on Mg(2+) as a cofactor.

The protein resides in the cytoplasm. The catalysed reaction is beta-D-fructose 6-phosphate + ATP = beta-D-fructose 1,6-bisphosphate + ADP + H(+). Its pathway is carbohydrate degradation; glycolysis; D-glyceraldehyde 3-phosphate and glycerone phosphate from D-glucose: step 3/4. Allosterically activated by ADP and other diphosphonucleosides, and allosterically inhibited by phosphoenolpyruvate. Its function is as follows. Catalyzes the phosphorylation of D-fructose 6-phosphate to fructose 1,6-bisphosphate by ATP, the first committing step of glycolysis. In Enterobacter cloacae, this protein is ATP-dependent 6-phosphofructokinase.